Consider the following 173-residue polypeptide: Ribosome maturation factor RimM (173 aa).

Residues 95–169 (EGSYYFKDIL…RIEVTLLEGL (75 aa)) enclose the PRC barrel domain.

The protein belongs to the RimM family. Binds ribosomal protein uS19.

It localises to the cytoplasm. Its function is as follows. An accessory protein needed during the final step in the assembly of 30S ribosomal subunit, possibly for assembly of the head region. Essential for efficient processing of 16S rRNA. May be needed both before and after RbfA during the maturation of 16S rRNA. It has affinity for free ribosomal 30S subunits but not for 70S ribosomes. This chain is Ribosome maturation factor RimM, found in Lactobacillus johnsonii (strain CNCM I-12250 / La1 / NCC 533).